Consider the following 202-residue polypeptide: Keratin-associated protein 5-10 (202 aa).

7 repeat units span residues 48 to 51, 54 to 57, 144 to 147, 162 to 165, 172 to 175, 182 to 185, and 192 to 195. The interval 48 to 195 is 7 X 4 AA repeats of C-C-X-P; that stretch reads CCKPVCCCVP…CCCQSSCCVP (148 aa).

It belongs to the KRTAP type 5 family. Interacts with hair keratins. In terms of tissue distribution, expressed in hair root but not in skin. Expressed also in brain and skeletal muscle.

In terms of biological role, in the hair cortex, hair keratin intermediate filaments are embedded in an interfilamentous matrix, consisting of hair keratin-associated protein (KRTAP), which are essential for the formation of a rigid and resistant hair shaft through their extensive disulfide bond cross-linking with abundant cysteine residues of hair keratins. The matrix proteins include the high-sulfur and high-glycine-tyrosine keratins. The protein is Keratin-associated protein 5-10 (KRTAP5-10) of Homo sapiens (Human).